Reading from the N-terminus, the 237-residue chain is Ribosomal RNA small subunit methyltransferase G (237 aa).

S-adenosyl-L-methionine-binding positions include G78, F83, 129–130 (AE), and R148. The segment at 216–237 (SKKKETPNKYPRKAGTPNKKPL) is disordered.

This sequence belongs to the methyltransferase superfamily. RNA methyltransferase RsmG family.

The protein resides in the cytoplasm. Specifically methylates the N7 position of a guanine in 16S rRNA. In Streptococcus agalactiae serotype Ia (strain ATCC 27591 / A909 / CDC SS700), this protein is Ribosomal RNA small subunit methyltransferase G.